A 65-amino-acid chain; its full sequence is Potassium channel toxin kappa-KTx 2.6 (65 aa).

Residues 1 to 27 (MKTSKMICAFLLVLVVGTFNDISGAYG) form the signal peptide. Residues 28 to 39 (EYVEDQHSFKIE) constitute a propeptide that is removed on maturation. Intrachain disulfides connect C45–C63 and C49–C59.

This sequence belongs to the short scorpion toxin superfamily. Potassium channel inhibitor kappa-KTx family. Kappa-KTx 2 subfamily. Expressed by the venom gland.

The protein resides in the secreted. Its function is as follows. Potassium channel inhibitor (Kv). The chain is Potassium channel toxin kappa-KTx 2.6 from Opisthacanthus cayaporum (South American scorpion).